The chain runs to 362 residues: RING-H2 finger protein ATL52 (362 aa).

A helical transmembrane segment spans residues 58–78; it reads LIALIGILTSALILVSYYTLI. The segment at 142–184 adopts an RING-type; atypical zinc-finger fold; sequence CSVCLSEFEENESLRLLPKCNHAFHLPCIDTWLKSHSNCPLCR. 2 disordered regions span residues 252–271 and 296–333; these read DARSELQLPEERRETKDEDS and EDEEGESGGVGTSQRREEGEDGDGKTIPPTEANQRSGG. A compositionally biased stretch (basic and acidic residues) spans 309–319; sequence QRREEGEDGDG.

It belongs to the RING-type zinc finger family. ATL subfamily. As to expression, expressed in flowers.

Its subcellular location is the membrane. It catalyses the reaction S-ubiquitinyl-[E2 ubiquitin-conjugating enzyme]-L-cysteine + [acceptor protein]-L-lysine = [E2 ubiquitin-conjugating enzyme]-L-cysteine + N(6)-ubiquitinyl-[acceptor protein]-L-lysine.. It functions in the pathway protein modification; protein ubiquitination. The protein is RING-H2 finger protein ATL52 (ATL52) of Arabidopsis thaliana (Mouse-ear cress).